A 201-amino-acid chain; its full sequence is Probable GTP-binding protein EngB (201 aa).

Residues T22–E197 enclose the EngB-type G domain. Residues G30–S37, G57–L61, D75–G78, T142–D145, and I175–S178 each bind GTP. S37 and T59 together coordinate Mg(2+).

The protein belongs to the TRAFAC class TrmE-Era-EngA-EngB-Septin-like GTPase superfamily. EngB GTPase family. It depends on Mg(2+) as a cofactor.

Functionally, necessary for normal cell division and for the maintenance of normal septation. The protein is Probable GTP-binding protein EngB of Bacteroides fragilis (strain YCH46).